A 208-amino-acid polypeptide reads, in one-letter code: Ribosomal RNA large subunit methyltransferase E (208 aa).

The S-adenosyl-L-methionine site is built by glycine 62, tryptophan 64, aspartate 82, aspartate 98, and aspartate 123. Catalysis depends on lysine 163, which acts as the Proton acceptor.

The protein belongs to the class I-like SAM-binding methyltransferase superfamily. RNA methyltransferase RlmE family.

It is found in the cytoplasm. The catalysed reaction is uridine(2552) in 23S rRNA + S-adenosyl-L-methionine = 2'-O-methyluridine(2552) in 23S rRNA + S-adenosyl-L-homocysteine + H(+). In terms of biological role, specifically methylates the uridine in position 2552 of 23S rRNA at the 2'-O position of the ribose in the fully assembled 50S ribosomal subunit. The protein is Ribosomal RNA large subunit methyltransferase E of Mannheimia succiniciproducens (strain KCTC 0769BP / MBEL55E).